Here is a 49-residue protein sequence, read N- to C-terminus: Large ribosomal subunit protein bL33 (49 aa).

The protein belongs to the bacterial ribosomal protein bL33 family.

In Syntrophomonas wolfei subsp. wolfei (strain DSM 2245B / Goettingen), this protein is Large ribosomal subunit protein bL33.